We begin with the raw amino-acid sequence, 493 residues long: Dipeptide permease D (493 aa).

Transmembrane regions (helical) follow at residues 14-34 (VVAL…LLIL), 49-69 (ELFS…GYLA), 91-111 (LVLG…AIIV), 138-158 (GGFS…PIAC), 167-187 (WAMG…IFLC), 212-232 (NWGW…VLFW), 235-255 (WSVY…AKIY), 267-287 (LGLI…AQQG), 312-332 (MFQS…AWLV), 344-364 (IWGK…ILTL), 379-399 (LMVL…PVAM), 413-433 (VLTG…AGVI), and 458-478 (VFEQ…LIWL).

It belongs to the major facilitator superfamily. Proton-dependent oligopeptide transporter (POT/PTR) (TC 2.A.17) family. DtpD subfamily.

It is found in the cell inner membrane. Its function is as follows. Probable proton-dependent permease that transports dipeptides. This Salmonella paratyphi C (strain RKS4594) protein is Dipeptide permease D.